A 761-amino-acid polypeptide reads, in one-letter code: Zinc finger protein 711 (761 aa).

5 C2H2-type zinc fingers span residues 383 to 408 (YPCHICGKKFKSRGFLKRHMKNHPDH), 414 to 436 (YQCTDCEFTTNKKVSFHNHLESH), 476 to 499 (HKCKYCEYETAEQGLLNRHLLAVH), 505 to 527 (HVCVECAKGFRHPSELKKHMRTH), and 533 to 556 (FHCQHCEFSCADQSNLKTHIKSKH). The C2H2-type 6; atypical zinc-finger motif lies at 562 to 584 (FKCGHCPQAFADDKELQRHAEIF). 3 residues coordinate Zn(2+): cysteine 564, cysteine 567, and histidine 580. 6 consecutive C2H2-type zinc fingers follow at residues 590–613 (HQCPHCEHKSTNSSDLKRHIISVH), 619–641 (HKCDVCEKGFHRPSELKKHSETH), 647–670 (HQCRHCDFKTLDPFTLSRHILSVH), 676–698 (FKCKRCKRGFRHQNELKKHMKTH), 704–727 (YQCQYCEYNTTDASGFKRHVISIH), and 733–755 (HRCDYCKKGFRRPSEKNQHIMRH).

The protein belongs to the krueppel C2H2-type zinc-finger protein family. In terms of tissue distribution, present in ovary and brain but not in other tissues (at protein level).

The protein resides in the nucleus. It is found in the cytoplasm. Its function is as follows. Transcription regulator required for brain development. Probably acts as a transcription factor that binds to the promoter of target genes, leading to activate their expression. The chain is Zinc finger protein 711 (znf711) from Danio rerio (Zebrafish).